The chain runs to 347 residues: NADH-ubiquinone oxidoreductase chain 2 (347 aa).

10 consecutive transmembrane segments (helical) span residues 1–21 (MNPL…AIVA), 25–45 (HWLM…PILM), 59–79 (YFLT…MNLV), 111–131 (FHFW…LILL), 149–169 (INLD…GWGG), 178–198 (IMAY…AYNP), 201–221 (TLLN…MFML), 237–257 (MPLL…LPPL), 276–296 (VILP…YMRL), and 326–346 (LSPL…LALL).

The protein belongs to the complex I subunit 2 family. Core subunit of respiratory chain NADH dehydrogenase (Complex I) which is composed of 45 different subunits. Interacts with TMEM242.

It localises to the mitochondrion inner membrane. The enzyme catalyses a ubiquinone + NADH + 5 H(+)(in) = a ubiquinol + NAD(+) + 4 H(+)(out). Core subunit of the mitochondrial membrane respiratory chain NADH dehydrogenase (Complex I) which catalyzes electron transfer from NADH through the respiratory chain, using ubiquinone as an electron acceptor. Essential for the catalytic activity and assembly of complex I. In Pteropus pumilus (Little golden-mantled flying fox), this protein is NADH-ubiquinone oxidoreductase chain 2.